Reading from the N-terminus, the 480-residue chain is Membrane-bound lytic murein transglycosylase F (480 aa).

Residues 1–15 (MKKLLFVLLTITLLA) form the signal peptide. The interval 16-259 (SCQKVSVEQT…HLNEKYFAHV (244 aa)) is non-LT domain. The interval 260–480 (KRFDYVDTRA…QENLSGAQPQ (221 aa)) is LT domain. The active site involves glutamate 304.

In the N-terminal section; belongs to the bacterial solute-binding protein 3 family. The protein in the C-terminal section; belongs to the transglycosylase Slt family.

It localises to the cell outer membrane. The catalysed reaction is Exolytic cleavage of the (1-&gt;4)-beta-glycosidic linkage between N-acetylmuramic acid (MurNAc) and N-acetylglucosamine (GlcNAc) residues in peptidoglycan, from either the reducing or the non-reducing ends of the peptidoglycan chains, with concomitant formation of a 1,6-anhydrobond in the MurNAc residue.. In terms of biological role, murein-degrading enzyme that degrades murein glycan strands and insoluble, high-molecular weight murein sacculi, with the concomitant formation of a 1,6-anhydromuramoyl product. Lytic transglycosylases (LTs) play an integral role in the metabolism of the peptidoglycan (PG) sacculus. Their lytic action creates space within the PG sacculus to allow for its expansion as well as for the insertion of various structures such as secretion systems and flagella. This Shewanella sediminis (strain HAW-EB3) protein is Membrane-bound lytic murein transglycosylase F.